A 102-amino-acid polypeptide reads, in one-letter code: Protein S100-A11 (102 aa).

Position 2 is a phosphoserine (serine 2). Residue threonine 7 is modified to Phosphothreonine. EF-hand domains are found at residues 12–47 (ESLI…LAAF) and 52–87 (KDPG…LAVA). At lysine 24 the chain carries N6-acetyllysine. Residues serine 28, threonine 30, glutamate 35, aspartate 65, asparagine 67, aspartate 69, glutamine 71, and glutamate 76 each contribute to the Ca(2+) site.

Belongs to the S-100 family. Homodimer; disulfide-linked. Post-translationally, phosphorylation at Thr-7 significantly suppresses homodimerization and promotes association with NCL/nucleolin which induces nuclear translocation. As to expression, smooth muscle and non-muscle tissues.

Its subcellular location is the cytoplasm. The protein localises to the nucleus. Its function is as follows. Facilitates the differentiation and the cornification of keratinocytes. The chain is Protein S100-A11 (S100A11) from Oryctolagus cuniculus (Rabbit).